Consider the following 219-residue polypeptide: Probable GTP-binding protein EngB (219 aa).

Positions 40–212 (LLPEIAFIGK…KASLAKCIIK (173 aa)) constitute an EngB-type G domain. GTP contacts are provided by residues 48 to 55 (GKSNVGKS), 75 to 79 (GRTGQ), 93 to 96 (DLPG), 160 to 163 (TKFD), and 191 to 193 (VSS). Mg(2+)-binding residues include S55 and T77.

Belongs to the TRAFAC class TrmE-Era-EngA-EngB-Septin-like GTPase superfamily. EngB GTPase family. It depends on Mg(2+) as a cofactor.

In terms of biological role, necessary for normal cell division and for the maintenance of normal septation. In Rickettsia canadensis (strain McKiel), this protein is Probable GTP-binding protein EngB.